Here is a 184-residue protein sequence, read N- to C-terminus: Probable RNA 2'-phosphotransferase (184 aa).

The protein belongs to the KptA/TPT1 family.

In terms of biological role, removes the 2'-phosphate from RNA via an intermediate in which the phosphate is ADP-ribosylated by NAD followed by a presumed transesterification to release the RNA and generate ADP-ribose 1''-2''-cyclic phosphate (APPR&gt;P). May function as an ADP-ribosylase. The sequence is that of Probable RNA 2'-phosphotransferase from Shigella boydii serotype 18 (strain CDC 3083-94 / BS512).